The following is a 221-amino-acid chain: Ribonuclease T (221 aa).

Positions V20–F196 constitute an Exonuclease domain. D23, E25, H183, and D188 together coordinate Mg(2+). Catalysis depends on H183, which acts as the Proton donor/acceptor.

This sequence belongs to the RNase T family. In terms of assembly, homodimer. Requires Mg(2+) as cofactor.

Functionally, trims short 3' overhangs of a variety of RNA species, leaving a one or two nucleotide 3' overhang. Responsible for the end-turnover of tRNA: specifically removes the terminal AMP residue from uncharged tRNA (tRNA-C-C-A). Also appears to be involved in tRNA biosynthesis. In Chromohalobacter salexigens (strain ATCC BAA-138 / DSM 3043 / CIP 106854 / NCIMB 13768 / 1H11), this protein is Ribonuclease T.